The following is a 203-amino-acid chain: Abscisic acid receptor PYL5 (203 aa).

Polar residues predominate over residues 1–18 (MRSPVQLQHGSDATNGFH). The interval 1-29 (MRSPVQLQHGSDATNGFHTLQPHDQTDGP) is disordered. Residues 51 to 201 (HDVGPDQCCS…NLQSLARSTN (151 aa)) are START-like. Abscisate-binding positions include Lys87, 117–122 (AVSSTE), 144–150 (RLKNYRS), and Glu166. The Gate loop signature appears at 113–117 (SGLPA). Residues 143–145 (HRL) carry the Latch loop motif.

The protein belongs to the PYR/PYL/RCAR abscisic acid intracellular receptor family. In terms of assembly, monomer. Homodimer. Binds ABA on one subunit only. Binds to CARs protein in an ABA-independent manner, both at the plasma membrane and in the nucleus. Binds both (-)-ABA and (+)-ABA. Interacts with HAB1, ABI1 and ABI2, and possibly with other PP2Cs.

The protein localises to the cytoplasm. The protein resides in the nucleus. Its subcellular location is the cell membrane. Functionally, receptor for abscisic acid (ABA) required for ABA-mediated responses such as stomatal closure and germination inhibition. Inhibits the activity of group-A protein phosphatases type 2C (PP2Cs) in an ABA-independent manner but more efficiently when activated by ABA. Confers enhanced sensitivity to ABA. Can be activated by both (-)-ABA and (+)-ABA. The protein is Abscisic acid receptor PYL5 (PYL5) of Arabidopsis thaliana (Mouse-ear cress).